The following is a 379-amino-acid chain: Stimulator of interferon genes protein (379 aa).

The Cytoplasmic portion of the chain corresponds to 1 to 17 (MPHSSLHPSIPCPRGHG). The mediates interaction with ZDHHC1 and ZDHHC11 stretch occupies residues 1–190 (MPHSSLHPSI…TYNQHYNNLL (190 aa)). The helical transmembrane segment at 18-34 (AQKAALVLLSACLVTLW) threads the bilayer. Lys-20 participates in a covalent cross-link: Glycyl lysine isopeptide (Lys-Gly) (interchain with G-Cter in ubiquitin). Over 35–44 (GLGEPPEHTL) the chain is Lumenal. A helical transmembrane segment spans residues 45-69 (RYLVLHLASLQLGLLLNGVCSLAEE). Residues 70–91 (LRHIHSRYRGSYWRTVRACLGC) are Cytoplasmic-facing. 2 S-palmitoyl cysteine lipidation sites follow: Cys-88 and Cys-91. The helical transmembrane segment at 92–106 (PLRRGALLLLSIYFY) threads the bilayer. Residues 107 to 116 (YSLPNAVGPP) lie on the Lumenal side of the membrane. The helical transmembrane segment at 117–134 (FTWMLALLGLSQALNILL) threads the bilayer. At 135-379 (GLKGLAPAEI…KPLPLRTDFS (245 aa)) the chain is on the cytoplasmic side. Residue Lys-150 forms a Glycyl lysine isopeptide (Lys-Gly) (interchain with G-Cter in ubiquitin) linkage. The tract at residues 153 to 340 (FNVAHGLAWS…RHLRQEEKEE (188 aa)) is cyclic dinucleotide-binding domain (CBD). Ser-162 and Tyr-167 together coordinate 2',3'-cGAMP. 2 residues coordinate 3',3'-c-di-GMP: Ser-162 and Tyr-167. Tyr-167 provides a ligand contact to 2',3'-cUAMP. Thr-229 carries the phosphothreonine modification. Residue Lys-236 forms a Glycyl lysine isopeptide (Lys-Gly) (interchain with G-Cter in ubiquitin) linkage. Arg-238 lines the 2',3'-cGAMP pocket. A 2',3'-cUAMP-binding site is contributed by Arg-238. 3',3'-c-di-GMP contacts are provided by residues 238-241 (RVYS) and Thr-263. A Phosphoserine modification is found at Ser-241. Thr-263 serves as a coordination point for 2',3'-cGAMP. Thr-263 contacts 2',3'-cUAMP. Lys-338 is covalently cross-linked (Glycyl lysine isopeptide (Lys-Gly) (interchain with G-Cter in SUMO)). The tract at residues 340 to 379 (EVTVGSLKTSAVPSTSTMSQEPELLISGMEKPLPLRTDFS) is C-terminal tail (CTT). Residues 341–370 (VTVGSLKTSAVPSTSTMSQEPELLISGMEK) form a disordered region. Over residues 345–359 (SLKTSAVPSTSTMSQ) the composition is skewed to polar residues. Thr-354 is subject to Phosphothreonine. Ser-355 carries the post-translational modification Phosphoserine; by MAP3K7. Thr-356 carries the phosphothreonine modification. Phosphoserine; by TBK1 occurs at positions 358 and 366. A pLxIS motif motif is present at residues 363–366 (LLIS).

This sequence belongs to the STING family. In terms of assembly, homodimer; forms a homodimer in absence of cyclic nucleotide (c-di-GMP or cGAMP); 'Lys-63'-linked ubiquitination at Lys-150 is required for homodimerization. Homotetramer; in presence of cyclic nucleotide (c-di-GMP or cGAMP), forms tetramers and higher-order oligomers through side-by-side packing. Interacts (when phosphorylated) with IRF3; following activation and phosphorylation on the pLxIS motif by TBK1, recruits IRF3. Interacts with RIGI, MAVS and SSR2. Interacts with RNF5 and TRIM56. Interacts with TBK1; when homodimer, leading to subsequent production of IFN-beta. Interacts with IFIT1 and IFIT2. Interacts with TRIM29; this interaction induces STING1 ubiquitination and subsequent degradation. Associates with the MHC-II complex. Interacts with STEEP1; interaction takes place upon cGAMP-activation and STING1 phosphorylation by MAP3K7/TAK1 and promotes STING1 translocation to COPII vesicles. Interacts with SEC24A, SEC24B, and SEC24C; promoting translocation to COPII vesicles. Interacts (when ubiquitinated) with SQSTM1; leading to relocalization to autophagosomes. Interacts with SURF4. Interacts with HNRNPA2B1. Interacts with ZDHHC1; ZDHHC1 constitutively interacts with STING1 and in presence of DNA viruses activates it by promoting its cGAMP-induced oligomerization and the recruitment of downstream signaling components. Interacts with ZDHHC11; in presence of DNA viruses promotes the recruitment of IRF3 to STING1. Interacts with TOMM70. Interacts with isoform IFI16-beta of IFI16. Interacts with TAB1; promoting recruitment of TAB1 to the endoplasmic reticulum membrane and subsequent activation of MAP3K7/TAK1. Interacts (via transmembrane domain) with TMEM203. Interacts with DDX41. Interacts with TMEM120A (via C-terminal domain); regulates the trafficking of STING1 from the ER to the ER-Golgi intermediate compartment to elicit antiviral effects. As to quaternary structure, (Microbial infection) Interacts with human papillomavirus (HPV) protein E7. (Microbial infection) Interacts with adenovirus early E1A protein. In terms of assembly, (Microbial infection) Interacts with herpes simplex virus 1 protein ICP34.5; this interaction inhibits the intracellular DNA sensing pathway. As to quaternary structure, (Microbial infection) Interacts with Chikungunya virus non-structural protein 1; this interaction results in inhibition of cGAS-STING signaling and increased levels of palmitoylated nsP1 and protein stabilization. (Microbial infection) Interacts with human cytomegalovirus proteins UL94, UL42 and UL138; these interactions result in the inhibition of cGAS-STING signaling. In terms of assembly, (Microbial infection) Interacts with varivella virus protein 39; this interaction results in the inhibition of cGAS-STING signaling. Post-translationally, phosphorylation by TBK1 leads to activation and production of IFN-beta. Following cyclic nucleotide (c-di-GMP or cGAMP)-binding, activation and translocation from the endoplasmic reticulum, STING1 is phosphorylated by TBK1 at Ser-366 in the pLxIS motif. The phosphorylated pLxIS motif constitutes an IRF3-binding motif, leading to recruitment of the transcription factor IRF3 to induce type-I interferons and other cytokines. The phosphorylated pLxIS motif facilitates SENP2 recruitment during late phase of viral infection. Phosphorylated on tyrosine residues upon MHC-II aggregation. Dephosphorylation by PPP6C leads to inactivation and decreased production of IFN-beta. Phosphorylation at Ser-358 is also required to activate IRF3. Phosphorylation at Ser-355 by MAP3K7/TAK1 facilitates its interaction with STEEP1, promoting STING1 translocation to COPII vesicles. In terms of processing, ubiquitinated. Ubiquitinated via 'Lys-63'-linked ubiquitin chains in response to double-stranded DNA treatment, leading to relocalization to autophagosomes and subsequent degradation; this process is dependent on SQSTM1. 'Lys-63'-linked ubiquitination mediated by TRIM56 at Lys-150 promotes homodimerization and recruitment of the antiviral kinase TBK1 and subsequent production of IFN-beta. 'Lys-48'-linked polyubiquitination at Lys-150 occurring after viral infection is mediated by RNF5 and leads to proteasomal degradation. 'Lys-11'-linked polyubiquitination at Lys-150 by RNF26 leads to stabilize STING1: it protects STING1 from RNF5-mediated 'Lys-48'-linked polyubiquitination. 'Lys-33'-linked and 'Lys-48'-linked deubiquitinated by USP20; leading to its stabilization and promotion of innate antiviral response. 'Lys-48'-linked deubiquitinated by USP44; leading to its stabilization and promotion of innate antiviral response. Deubiquitinated by USP13; leading to inhibition of innate antiviral response. 'Lys-63'-linked deubiquitinated by USP49; leading to inhibition of the subsequent recruitment of TBK1 to the signaling complex. 'Lys-63'-linked ubiquitination mediated by RNF39 promotes the activation of the cGAS-STING pathway. MARCHF5-mediated ubiquitination prevents the oxidation-induced polymer formation. (Microbial infection) Deubiquitinated by Epstein-Barr virus BPLF1 on both 'Lys-48' and 'Lys-63'-linked ubiquitin chains; leading to inhibition of cGAS-STING signaling. Post-translationally, sumoylated at Lys-338 by TRIM38 during the early phase of viral infection, promoting its stability by preventing its relocalization to autophagosomes and subsequent degradation. Desumoylated by SENP2 during the late phase of viral infection. In terms of processing, palmitoylation takes place in the Golgi apparatus and creates a platform for the recruitment of TBK1. In terms of tissue distribution, ubiquitously expressed. Expressed in skin endothelial cells, alveolar type 2 pneumocytes, bronchial epithelium and alveolar macrophages.

It is found in the endoplasmic reticulum membrane. The protein resides in the cytoplasm. It localises to the perinuclear region. Its subcellular location is the endoplasmic reticulum-Golgi intermediate compartment membrane. The protein localises to the golgi apparatus membrane. It is found in the cytoplasmic vesicle. The protein resides in the autophagosome membrane. It localises to the mitochondrion outer membrane. Its subcellular location is the cell membrane. It catalyses the reaction H(+)(in) = H(+)(out). Activated upon binding to the hydrolysis-resistant 2'3'-cG(s)A(s)MP, an analog of cGAMP, in which phosphodiester linkages are replaced by phosphothioate linkages. Specifically inhibited by small-molecule H-151 (N-(4-ethylphenyl)-N'-1H-indol-3-yl-urea), which covalently binds Cys-91 and prevents palmitoylation and subsequent activation of STING1. In contrast to mouse protein, not activated by anticancer molecule 5,6-dimethylxanthenone 4-acetic acid (DMXAA). Inhibited by compound 18 ([(3S,4S)-2-(4-tert-butyl-3-chlorophenyl)-3-(2,3-dihydro-1,4-benzodioxin-6-yl)-7-fluoro-1-oxo-1,2,3,4-tetrahydroisoquinolin-4-yl]acetate), a competitive inhibitor with slow dissociation kinetics and good oral bioavailability. Homooligomerization and ability to promote the production of type I interferons is activated by C53, a small benzothiazinone-like compound that binds to the transmembrane regions. in the area of the putative pore. In contrast, compound C53, directly inhibits the proton channel activity and facilitate MAP1LC3B/LC3B lipidation and autophagosome formation. Functionally, facilitator of innate immune signaling that acts as a sensor of cytosolic DNA from bacteria and viruses and promotes the production of type I interferon (IFN-alpha and IFN-beta). Innate immune response is triggered in response to non-CpG double-stranded DNA from viruses and bacteria delivered to the cytoplasm. Acts by binding cyclic dinucleotides: recognizes and binds cyclic di-GMP (c-di-GMP), a second messenger produced by bacteria, cyclic UMP-AMP (2',3'-cUAMP), and cyclic GMP-AMP (cGAMP), a messenger produced by CGAS in response to DNA virus in the cytosol. Upon binding to c-di-GMP, cUAMP or cGAMP, STING1 oligomerizes, translocates from the endoplasmic reticulum and is phosphorylated by TBK1 on the pLxIS motif, leading to recruitment and subsequent activation of the transcription factor IRF3 to induce expression of type I interferon and exert a potent anti-viral state. Exhibits 2',3' phosphodiester linkage-specific ligand recognition: can bind both 2'-3' linked cGAMP (2'-3'-cGAMP) and 3'-3' linked cGAMP but is preferentially activated by 2'-3' linked cGAMP. The preference for 2'-3'-cGAMP, compared to other linkage isomers is probably due to the ligand itself, whichs adopts an organized free-ligand conformation that resembles the STING1-bound conformation and pays low energy costs in changing into the active conformation. In addition to promote the production of type I interferons, plays a direct role in autophagy. Following cGAMP-binding, STING1 buds from the endoplasmic reticulum into COPII vesicles, which then form the endoplasmic reticulum-Golgi intermediate compartment (ERGIC). The ERGIC serves as the membrane source for WIPI2 recruitment and LC3 lipidation, leading to formation of autophagosomes that target cytosolic DNA or DNA viruses for degradation by the lysosome. Promotes autophagy by acting as a proton channel that directs proton efflux from the Golgi to facilitate MAP1LC3B/LC3B lipidation. The autophagy- and interferon-inducing activities can be uncoupled and autophagy induction is independent of TBK1 phosphorylation. Autophagy is also triggered upon infection by bacteria: following c-di-GMP-binding, which is produced by live Gram-positive bacteria, promotes reticulophagy. May be involved in translocon function, the translocon possibly being able to influence the induction of type I interferons. May be involved in transduction of apoptotic signals via its association with the major histocompatibility complex class II (MHC-II). Its function is as follows. (Microbial infection) Antiviral activity is antagonized by oncoproteins, such as papillomavirus (HPV) protein E7 and adenovirus early E1A protein. Such oncoproteins prevent the ability to sense cytosolic DNA. The sequence is that of Stimulator of interferon genes protein from Homo sapiens (Human).